Reading from the N-terminus, the 783-residue chain is Ubiquitin carboxyl-terminal hydrolase 1 (783 aa).

Disordered stretches follow at residues 1–22 (MPGV…KKNR) and 34–55 (KRAL…YKGS). Polar residues predominate over residues 7–16 (SESNGLSRGS). Phosphoserine occurs at positions 16 and 42. A compositionally biased stretch (basic and acidic residues) spans 45 to 55 (NEEKTSEYKGS). Residue S67 is modified to Phosphoserine. Residues 81 to 783 (VGLNNLGNTC…TPYLLFYKKL (703 aa)) form the USP domain. C90 acts as the Nucleophile in catalysis. Residues 234-311 (EEYQKEEMSD…RKAAGDTLEI (78 aa)) are disordered. Basic and acidic residues-rich tracts occupy residues 250–273 (DNMR…KSDA) and 284–296 (ISKE…ENQR). Phosphoserine is present on S473. H591 functions as the Proton acceptor in the catalytic mechanism. Positions 685–722 (PDKVASTALPENRNSETNNTNGTDESDSNKESSDQTGI) are disordered. S766 bears the Phosphoserine mark.

This sequence belongs to the peptidase C19 family. As to quaternary structure, interacts with FANCD2 and PCNA. Interacts with WDR48. Interacts with ATAD5; the interaction regulates USP1-mediated PCNA deubiquitination. Post-translationally, autocatalytic cleavage of USP1 following UV irradiation inactivates it, leading to an increase in ubiquitinated PCNA, recruitment of POLH and translesion synthesis. In terms of processing, ubiquitinated by the CRL2(KLHDC2) complex following autocatalytic cleavage, leading to its degradation: the CRL2(KLHDC2) complex recognizes the diglycine (Gly-Gly) at the C-terminus.

Its subcellular location is the nucleus. It carries out the reaction Thiol-dependent hydrolysis of ester, thioester, amide, peptide and isopeptide bonds formed by the C-terminal Gly of ubiquitin (a 76-residue protein attached to proteins as an intracellular targeting signal).. Its function is as follows. Negative regulator of DNA damage repair which specifically deubiquitinates monoubiquitinated FANCD2. Also involved in PCNA-mediated translesion synthesis (TLS) by deubiquitinating monoubiquitinated PCNA. Has almost no deubiquitinating activity by itself and requires the interaction with WDR48 to have a high activity. The chain is Ubiquitin carboxyl-terminal hydrolase 1 from Bos taurus (Bovine).